A 1114-amino-acid polypeptide reads, in one-letter code: Translation initiation factor IF-2 (1114 aa).

Disordered regions lie at residues 69–102 (SIKK…PLLI) and 181–507 (INNN…KRRA). Over residues 85 to 96 (SKKETPLKDNSN) the composition is skewed to basic and acidic residues. Residues 181–198 (INNNVKSNESSQNISSAG) show a composition bias toward polar residues. A compositionally biased stretch (low complexity) spans 240-251 (INPNKQNNKQNI). Residues 252 to 261 (AFKQTGSNRI) are compositionally biased toward polar residues. Low complexity-rich tracts occupy residues 262–278 (GSPN…GLRN), 290–309 (NRQG…GLRN), and 321–337 (NRQG…NRPG). The span at 365–375 (NSEKDNKDKNN) shows a compositional bias: basic and acidic residues. A compositionally biased stretch (low complexity) spans 376–385 (NAKQNINGPN). Residues 417-431 (GKTDWDDSAKLEALR) show a composition bias toward basic and acidic residues. Residues 489 to 505 (KQFKKKKKETTRQRQKR) show a composition bias toward basic residues. The region spanning 606-778 (RRPPVITVMG…ILLVSEVEDL (173 aa)) is the tr-type G domain. The segment at 615-622 (GHVDHGKT) is G1. 615–622 (GHVDHGKT) contributes to the GTP binding site. A G2 region spans residues 640-644 (GITQH). The interval 665–668 (DTPG) is G3. Residues 665 to 669 (DTPGH) and 719 to 722 (NKID) each bind GTP. The segment at 719–722 (NKID) is G4. The G5 stretch occupies residues 755-757 (SAI).

Belongs to the TRAFAC class translation factor GTPase superfamily. Classic translation factor GTPase family. IF-2 subfamily.

The protein localises to the cytoplasm. Functionally, one of the essential components for the initiation of protein synthesis. Protects formylmethionyl-tRNA from spontaneous hydrolysis and promotes its binding to the 30S ribosomal subunits. Also involved in the hydrolysis of GTP during the formation of the 70S ribosomal complex. This is Translation initiation factor IF-2 from Prochlorococcus marinus (strain MIT 9301).